We begin with the raw amino-acid sequence, 383 residues long: MTIGIDKISFFVPPYYIDMTALAEARNVDPGKFHIGIGQDQMAVNPISQDIVTFAANAAEAILTKEDKEAIDMVIVGTESSIDESKAAAVVLHRLMGIQPFARSFEIKEACYGATAGLQLAKNHVALHPDKKVLVVAADIAKYGLNSGGEPTQGAGAVAMLVASEPRILALKEDNVMLTQDIYDFWRPTGHPYPMVDGPLSNETYIQSFAQVWDEHKKRTGLDFADYDALAFHIPYTKMGKKALLAKISDQTEAEQERILARYEESIIYSRRVGNLYTGSLYLGLISLLENATTLTAGNQIGLFSYGSGAVAEFFTGELVAGYQNHLQKETHLALLDNRTELSIAEYEAMFAETLDTDIDQTLEDELKYSISAINNTVRSYRN.

(3S)-3-hydroxy-3-methylglutaryl-CoA is bound at residue Asp-29. Glu-79 (proton donor/acceptor) is an active-site residue. Residues Cys-111, Thr-152, Ser-201, His-233, Lys-242, Asn-275, and Ser-308 each contribute to the (3S)-3-hydroxy-3-methylglutaryl-CoA site. The active-site Acyl-thioester intermediate is the Cys-111. Catalysis depends on His-233, which acts as the Proton donor/acceptor.

This sequence belongs to the thiolase-like superfamily. HMG-CoA synthase family. In terms of assembly, homodimer.

The catalysed reaction is acetoacetyl-CoA + acetyl-CoA + H2O = (3S)-3-hydroxy-3-methylglutaryl-CoA + CoA + H(+). It functions in the pathway metabolic intermediate biosynthesis; (R)-mevalonate biosynthesis; (R)-mevalonate from acetyl-CoA: step 2/3. Is sensitive to feedback substrate inhibition by acetoacetyl-CoA. Is inactivated by hymeglusin, which also blocks the growth of E.faecalis, indicating the critical role that the mevalonate pathway plays in isoprenoid biosynthesis. Catalyzes the condensation of acetyl-CoA with acetoacetyl-CoA to form 3-hydroxy-3-methylglutaryl-CoA (HMG-CoA). Functions in the mevalonate (MVA) pathway leading to isopentenyl diphosphate (IPP), a key precursor for the biosynthesis of isoprenoid compounds. The polypeptide is Hydroxymethylglutaryl-CoA synthase (mvaS) (Enterococcus faecalis (Streptococcus faecalis)).